The following is a 103-amino-acid chain: MKFLALLCLGMVGFAFGAEVSGLDMIKSYSIAGAVIGLGIAALGGAIGMGHAAAATISGTARNPGISGKLLGTMFIALALIEAQVIYTLVLALIALYANPFLS.

3 helical membrane passes run 3-23 (FLAL…VSGL), 30-50 (SIAG…IGMG), and 74-94 (MFIA…LALI).

Belongs to the ATPase C chain family. In terms of assembly, F-type ATPases have 2 components, F(1) - the catalytic core - and F(0) - the membrane proton channel. F(1) has five subunits: alpha(3), beta(3), gamma(1), delta(1), epsilon(1). F(0) has three main subunits: a(1), b(2) and c(10-14). The alpha and beta chains form an alternating ring which encloses part of the gamma chain. F(1) is attached to F(0) by a central stalk formed by the gamma and epsilon chains, while a peripheral stalk is formed by the delta and b chains.

Its subcellular location is the cell inner membrane. F(1)F(0) ATP synthase produces ATP from ADP in the presence of a proton or sodium gradient. F-type ATPases consist of two structural domains, F(1) containing the extramembraneous catalytic core and F(0) containing the membrane proton channel, linked together by a central stalk and a peripheral stalk. During catalysis, ATP synthesis in the catalytic domain of F(1) is coupled via a rotary mechanism of the central stalk subunits to proton translocation. Its function is as follows. Key component of the F(0) channel; it plays a direct role in translocation across the membrane. A homomeric c-ring of between 10-14 subunits forms the central stalk rotor element with the F(1) delta and epsilon subunits. The chain is ATP synthase subunit c from Helicobacter hepaticus (strain ATCC 51449 / 3B1).